Here is a 134-residue protein sequence, read N- to C-terminus: ATP synthase epsilon chain, chloroplastic (134 aa).

It belongs to the ATPase epsilon chain family. F-type ATPases have 2 components, CF(1) - the catalytic core - and CF(0) - the membrane proton channel. CF(1) has five subunits: alpha(3), beta(3), gamma(1), delta(1), epsilon(1). CF(0) has three main subunits: a, b and c.

It is found in the plastid. The protein localises to the chloroplast thylakoid membrane. Produces ATP from ADP in the presence of a proton gradient across the membrane. In Liriodendron tulipifera (Tuliptree), this protein is ATP synthase epsilon chain, chloroplastic.